A 273-amino-acid polypeptide reads, in one-letter code: F-actin-capping protein subunit alpha (273 aa).

This sequence belongs to the F-actin-capping protein alpha subunit family. In terms of assembly, heterodimer of an alpha and a beta subunit.

The protein localises to the cytoplasm. The protein resides in the cytoskeleton. F-actin-capping proteins bind in a Ca(2+)-independent manner to the fast growing ends of actin filaments (barbed end) thereby blocking the exchange of subunits at these ends. Unlike other capping proteins (such as gelsolin and severin), these proteins do not sever actin filaments. The sequence is that of F-actin-capping protein subunit alpha (CAP1) from Gibberella zeae (strain ATCC MYA-4620 / CBS 123657 / FGSC 9075 / NRRL 31084 / PH-1) (Wheat head blight fungus).